Here is a 214-residue protein sequence, read N- to C-terminus: Pyrrolidone-carboxylate peptidase 2 (214 aa).

Catalysis depends on residues Glu-78, Cys-141, and His-165.

This sequence belongs to the peptidase C15 family. In terms of assembly, homotetramer.

Its subcellular location is the cytoplasm. The enzyme catalyses Release of an N-terminal pyroglutamyl group from a polypeptide, the second amino acid generally not being Pro.. Its function is as follows. Removes 5-oxoproline from various penultimate amino acid residues except L-proline. The polypeptide is Pyrrolidone-carboxylate peptidase 2 (Streptococcus pneumoniae serotype 4 (strain ATCC BAA-334 / TIGR4)).